Here is a 138-residue protein sequence, read N- to C-terminus: Probable lactoylglutathione lyase (138 aa).

Positions 5–129 (RILHTMLRVG…DGYMIELIQN (125 aa)) constitute a VOC domain. His8 provides a ligand contact to Ni(2+). Arg12 provides a ligand contact to substrate. Residue Glu59 participates in Ni(2+) binding. Substrate is bound by residues Asn63 and His77. Ni(2+)-binding residues include His77 and Glu125. Glu125 serves as the catalytic Proton donor/acceptor.

This sequence belongs to the glyoxalase I family. The cofactor is Ni(2+).

It catalyses the reaction (R)-S-lactoylglutathione = methylglyoxal + glutathione. It functions in the pathway secondary metabolite metabolism; methylglyoxal degradation; (R)-lactate from methylglyoxal: step 1/2. In terms of biological role, catalyzes the conversion of hemimercaptal, formed from methylglyoxal and glutathione, to S-lactoylglutathione. This is Probable lactoylglutathione lyase (gloA) from Vibrio cholerae serotype O1 (strain ATCC 39315 / El Tor Inaba N16961).